The following is a 641-amino-acid chain: Chaperone protein DnaK 2 (641 aa).

Threonine 199 carries the phosphothreonine; by autocatalysis modification. Residues 601–616 (MAQQQAQAQHAQSSQQ) show a composition bias toward low complexity. The interval 601 to 641 (MAQQQAQAQHAQSSQQTNDTTGQSSTDDDVFEAEFEEVKDK) is disordered. Acidic residues predominate over residues 626–635 (TDDDVFEAEF).

The protein belongs to the heat shock protein 70 family.

Its function is as follows. Acts as a chaperone. This chain is Chaperone protein DnaK 2, found in Photobacterium profundum (strain SS9).